The sequence spans 100 residues: Urease subunit gamma (100 aa).

The protein belongs to the urease gamma subunit family. In terms of assembly, heterotrimer of UreA (gamma), UreB (beta) and UreC (alpha) subunits. Three heterotrimers associate to form the active enzyme.

It localises to the cytoplasm. It catalyses the reaction urea + 2 H2O + H(+) = hydrogencarbonate + 2 NH4(+). The protein operates within nitrogen metabolism; urea degradation; CO(2) and NH(3) from urea (urease route): step 1/1. This is Urease subunit gamma from Corynebacterium glutamicum (strain R).